Consider the following 304-residue polypeptide: MTKVSIIGAAGTVGAAAGYNIALRDIADELVFVDIPDQRETTIGQAADANHGIAYDSNTTVVQGEYEDTAGSDVVVITAGIPRKEGQTRIDLAGDNAPIMEDIGASLDEYNDDYVSITTSNPVDLLNRHLYEAGDRDRHKVIGFGGRLDSARFRYVLSERFDVPVQNVEATILGEHGDAQVPVFSKVRVDGADPEFDGDEKEEILGDLQESAMDVISRKGATQWGPATGVAHMVEAVLNDTGEVLPGSLVLDGEYGYEDTAFGVPVKLGANGIEEVVEWDLDDYESELMDDAAEKLSDQYDKIS.

NAD(+) contacts are provided by residues glycine 8–glycine 14 and aspartate 34. 2 residues coordinate substrate: arginine 83 and arginine 89. NAD(+) contacts are provided by residues asparagine 96 and threonine 119–asparagine 121. Substrate contacts are provided by asparagine 121 and arginine 152. Residue histidine 176 is the Proton acceptor of the active site.

This sequence belongs to the LDH/MDH superfamily.

It catalyses the reaction (S)-malate + NAD(+) = oxaloacetate + NADH + H(+). Catalyzes the reversible oxidation of malate to oxaloacetate. The protein is Malate dehydrogenase (mdh) of Natronomonas pharaonis (strain ATCC 35678 / DSM 2160 / CIP 103997 / JCM 8858 / NBRC 14720 / NCIMB 2260 / Gabara) (Halobacterium pharaonis).